The primary structure comprises 221 residues: GTP-binding nuclear protein Ran-2 (221 aa).

The region spanning D10–D174 is the Small GTPase Ran-type domain. D21–T28 lines the GTP pocket. The switch-I stretch occupies residues K40–V48. GTP contacts are provided by residues G71, N125 to D128, and S153 to K155. Residues G71–Q87 form a switch-II region. Residues A202 to L212 are compositionally biased toward low complexity. The segment at A202–E221 is disordered.

Belongs to the small GTPase superfamily. Ran family. As to quaternary structure, found in a nuclear export complex with RanGTP, exportin and pre-miRNA. Interacts with RanBP1a and RanBP1b. Interacts with PHRIP1. Interacts with KPNB1. Binds to PHIP1.

It is found in the nucleus. Its subcellular location is the nucleus envelope. Its function is as follows. GTP-binding protein involved in nucleocytoplasmic transport. Required for the import of protein into the nucleus and also for RNA export. Involved in chromatin condensation and control of cell cycle. This Arabidopsis thaliana (Mouse-ear cress) protein is GTP-binding nuclear protein Ran-2.